Reading from the N-terminus, the 397-residue chain is Acetate kinase (397 aa).

Asparagine 8 provides a ligand contact to Mg(2+). Lysine 15 lines the ATP pocket. Arginine 92 contacts substrate. Catalysis depends on aspartate 149, which acts as the Proton donor/acceptor. Residues 209 to 213 (HLGNG), 283 to 285 (DFR), and 331 to 335 (GVGEN) contribute to the ATP site. Glutamate 385 lines the Mg(2+) pocket.

It belongs to the acetokinase family. In terms of assembly, homodimer. Mg(2+) is required as a cofactor. Requires Mn(2+) as cofactor.

The protein localises to the cytoplasm. The catalysed reaction is acetate + ATP = acetyl phosphate + ADP. The protein operates within metabolic intermediate biosynthesis; acetyl-CoA biosynthesis; acetyl-CoA from acetate: step 1/2. Catalyzes the formation of acetyl phosphate from acetate and ATP. Can also catalyze the reverse reaction. This is Acetate kinase from Corynebacterium glutamicum (strain ATCC 13032 / DSM 20300 / JCM 1318 / BCRC 11384 / CCUG 27702 / LMG 3730 / NBRC 12168 / NCIMB 10025 / NRRL B-2784 / 534).